Consider the following 318-residue polypeptide: Protein-methionine-sulfoxide reductase catalytic subunit MsrP (318 aa).

A signal peptide (tat-type signal) is located at residues 1–40 (MNRFTRYDVTPEVIFNQRRQIIKAMGLGAAALSLPNIGFA). Mo-molybdopterin contacts are provided by residues N72, 75–76 (YE), C130, T165, N217, R222, and 233–235 (SIK).

This sequence belongs to the MsrP family. In terms of assembly, heterodimer of a catalytic subunit (MsrP) and a heme-binding subunit (MsrQ). Mo-molybdopterin is required as a cofactor. Post-translationally, predicted to be exported by the Tat system. The position of the signal peptide cleavage has not been experimentally proven.

It localises to the periplasm. It catalyses the reaction L-methionyl-[protein] + a quinone + H2O = L-methionyl-(S)-S-oxide-[protein] + a quinol. The catalysed reaction is L-methionyl-[protein] + a quinone + H2O = L-methionyl-(R)-S-oxide-[protein] + a quinol. Functionally, part of the MsrPQ system that repairs oxidized periplasmic proteins containing methionine sulfoxide residues (Met-O), using respiratory chain electrons. Thus protects these proteins from oxidative-stress damage caused by reactive species of oxygen and chlorine generated by the host defense mechanisms. MsrPQ is essential for the maintenance of envelope integrity under bleach stress, rescuing a wide series of structurally unrelated periplasmic proteins from methionine oxidation. The catalytic subunit MsrP is non-stereospecific, being able to reduce both (R-) and (S-) diastereoisomers of methionine sulfoxide. The sequence is that of Protein-methionine-sulfoxide reductase catalytic subunit MsrP from Actinobacillus pleuropneumoniae serotype 3 (strain JL03).